The primary structure comprises 290 residues: Protein SSO1 (290 aa).

The Cytoplasmic portion of the chain corresponds to methionine 1 to arginine 265. The t-SNARE coiled-coil homology domain maps to leucine 190–alanine 252. The helical; Anchor for type IV membrane protein transmembrane segment at cysteine 266–valine 287 threads the bilayer. The Extracellular segment spans residues lysine 288–arginine 290.

The protein belongs to the syntaxin family.

The protein localises to the membrane. In terms of biological role, required for vesicle fusion with the plasma membrane. In Saccharomyces cerevisiae (strain ATCC 204508 / S288c) (Baker's yeast), this protein is Protein SSO1 (SSO1).